The sequence spans 388 residues: LL-diaminopimelate aminotransferase (388 aa).

Substrate-binding residues include tyrosine 13, glycine 38, lysine 102, tyrosine 126, and asparagine 176. Pyridoxal 5'-phosphate-binding positions include 101–102 (SK), tyrosine 126, asparagine 176, tyrosine 207, and 235–237 (SLS). The residue at position 238 (lysine 238) is an N6-(pyridoxal phosphate)lysine. Arginine 246 contributes to the pyridoxal 5'-phosphate binding site. Residue arginine 364 participates in substrate binding.

The protein belongs to the class-I pyridoxal-phosphate-dependent aminotransferase family. LL-diaminopimelate aminotransferase subfamily. As to quaternary structure, homodimer. Pyridoxal 5'-phosphate serves as cofactor.

It carries out the reaction (2S,6S)-2,6-diaminopimelate + 2-oxoglutarate = (S)-2,3,4,5-tetrahydrodipicolinate + L-glutamate + H2O + H(+). It functions in the pathway amino-acid biosynthesis; L-lysine biosynthesis via DAP pathway; LL-2,6-diaminopimelate from (S)-tetrahydrodipicolinate (aminotransferase route): step 1/1. Functionally, involved in the synthesis of meso-diaminopimelate (m-DAP or DL-DAP), required for both lysine and peptidoglycan biosynthesis. Catalyzes the direct conversion of tetrahydrodipicolinate to LL-diaminopimelate. The polypeptide is LL-diaminopimelate aminotransferase (Dehalococcoides mccartyi (strain ATCC BAA-2100 / JCM 16839 / KCTC 5957 / BAV1)).